A 102-amino-acid chain; its full sequence is Small ribosomal subunit protein uS10 (102 aa).

This sequence belongs to the universal ribosomal protein uS10 family. Part of the 30S ribosomal subunit.

Functionally, involved in the binding of tRNA to the ribosomes. This chain is Small ribosomal subunit protein uS10, found in Streptococcus suis (strain 98HAH33).